Consider the following 307-residue polypeptide: Plasmodesmata-located protein 2 (307 aa).

An N-terminal signal peptide occupies residues M1–V23. Residues V24–T275 lie on the Extracellular side of the membrane. Gnk2-homologous domains follow at residues T33 to F136 and G141 to N240. 6 disulfides stabilise this stretch: C40-C114, C90-C99, C102-C127, C149-C218, C194-C203, and C206-C231. The segment covering S246–S268 has biased composition (low complexity). The interval S246 to G270 is disordered. Residues V276–A296 traverse the membrane as a helical segment. The segment at V276–A296 is necessary and sufficient for plasmodesmal targeting. Over K297–Y307 the chain is Cytoplasmic.

This sequence belongs to the cysteine-rich repeat secretory protein family. Plasmodesmata-located proteins (PDLD) subfamily. (Microbial infection) Interacts with Grapevine fanleaf virus (GFLV) 2B-MP. Highly expressed in inflorescence shoot apex. Uniformly expressed within the inflorescence meristem with the exception of a boundary zone between floral primordia and the meristem where the expression is weaker (at protein level).

It is found in the cell membrane. The protein localises to the cell junction. It localises to the plasmodesma. Functionally, modulates cell-to-cell trafficking. The sequence is that of Plasmodesmata-located protein 2 from Arabidopsis thaliana (Mouse-ear cress).